A 139-amino-acid polypeptide reads, in one-letter code: Large ribosomal subunit protein uL16 (139 aa).

Over residues 1-17 (MLQPKRTKYRKQQKGRM) the composition is skewed to basic residues. The interval 1–25 (MLQPKRTKYRKQQKGRMKGLSQRGH) is disordered.

It belongs to the universal ribosomal protein uL16 family. Part of the 50S ribosomal subunit.

Its function is as follows. Binds 23S rRNA and is also seen to make contacts with the A and possibly P site tRNAs. This Christiangramia forsetii (strain DSM 17595 / CGMCC 1.15422 / KT0803) (Gramella forsetii) protein is Large ribosomal subunit protein uL16.